Consider the following 258-residue polypeptide: L-2,3-butanediol dehydrogenase (258 aa).

NAD(+) is bound by residues 12–14, Asp-33, Gln-37, 61–62, Asn-88, Tyr-154, Lys-158, and 184–189; these read QGI, DV, and PGIVGT. The active-site Proton acceptor is the Tyr-154.

Belongs to the short-chain dehydrogenases/reductases (SDR) family. Homotetramer.

The enzyme catalyses (S,S)-butane-2,3-diol + NAD(+) = (S)-acetoin + NADH + H(+). It catalyses the reaction (S)-acetoin + NAD(+) = diacetyl + NADH + H(+). Its activity is regulated as follows. Slightly activated by Ba(2+), Ca(2+), Mn(2+), Mg(2+), and Co(2+), while Hg(2+) and Cu(2+) cause marked inhibition of the activity. Ni(2+), Zn(2+) and Cd(2+) have no effect on the catalytic activity. Is also slightly inhibited by lactate, pyruvate, succinate, acetate and formate. Functionally, catalyzes the reversible reduction of (S)-acetoin to (S,S)-butane-2,3-diol (L-BD) in the presence of NADH. To a lesser extent, can also catalyze the irreversible reduction of diacetyl to (S)-acetoin. Cannot oxidize meso-BD, D-BD, 2-butanol, 1,2-propanediol, ethanol, acetol, 1,2-butanediol, 1,3-butanediol, n-butanol, and n-propanol. Cannot reduce (R)-acetoin, acetol, dihydroxyacetone and 2,4-pentanedione. The sequence is that of L-2,3-butanediol dehydrogenase from Corynebacterium glutamicum (Brevibacterium saccharolyticum).